A 1093-amino-acid chain; its full sequence is GPI ethanolamine phosphate transferase 3, catalytic subunit (1093 aa).

The chain crosses the membrane as a helical span at residues 4-24; it reads VSVLLFLAWVCFLFYAGIALF. A glycan (N-linked (GlcNAc...) asparagine) is linked at asparagine 268. 9 helical membrane-spanning segments follow: residues 460–480, 483–503, 512–532, 669–689, 702–722, 748–768, 831–851, 856–876, and 945–965; these read AAAC…GFLF, LLLI…GVSV, VVLG…KAWV, LWYG…RLWL, VLFV…YWAL, VMGL…TVLV, SVYS…LMLL, VSLV…LLAA, and FASH…PFLC. A disordered region spans residues 971-991; sequence KRRQPLPGSESEARVRPEEEE. Helical transmembrane passes span 1018 to 1038 and 1052 to 1072; these read LKYL…ASIL and FIFE…GIAL.

It belongs to the PIGG/PIGN/PIGO family. PIGO subfamily. Forms the ethanolamine phosphate transferase 3 complex composed by PIGO and PIGF. PIGF is required to stabilize PIGO.

The protein resides in the endoplasmic reticulum membrane. It participates in glycolipid biosynthesis; glycosylphosphatidylinositol-anchor biosynthesis. Its function is as follows. Catalytic subunit of the ethanolamine phosphate transferase 3 complex that transfers an ethanolamine phosphate (EtNP) from a phosphatidylethanolamine (PE) to the 6-OH position of the third alpha-1,2-linked mannose of the an alpha-D-Man-(1-&gt;2)-alpha-D-Man-(1-&gt;6)-2-PEtn-alpha-D-Man-(1-&gt;4)-alpha-D-GlcN-(1-&gt;6)-(1-radyl,2-acyl-sn-glycero-3-phospho)-2-acyl-inositol (also termed H6) intermediate to generate a 6-PEtn-alpha-D-Man-(1-&gt;2)-alpha-D-Man-(1-&gt;6)-2-PEtn-alpha-D-Man-(1-&gt;4)-alpha-D-GlcN-(1-&gt;6)-(1-radyl,2-acyl-sn-glycero-3-phospho)-2-acyl-inositol (also termed H7) and participates in the tenth step of the glycosylphosphatidylinositol-anchor biosynthesis. The protein is GPI ethanolamine phosphate transferase 3, catalytic subunit of Mus musculus (Mouse).